Here is a 438-residue protein sequence, read N- to C-terminus: Anthranilate synthase component 1 (438 aa).

Residues Ser-45 and 220 to 222 (PYL) each bind L-tryptophan. 255 to 256 (GT) is a binding site for chorismate. Glu-282 is a Mg(2+) binding site. Chorismate is bound by residues Tyr-370, Arg-389, 405-407 (GAG), and Gly-407. A Mg(2+)-binding site is contributed by Glu-420.

This sequence belongs to the anthranilate synthase component I family. As to quaternary structure, heterotetramer consisting of two non-identical subunits: a beta subunit (TrpG) and a large alpha subunit (TrpE). The cofactor is Mg(2+).

The catalysed reaction is chorismate + L-glutamine = anthranilate + pyruvate + L-glutamate + H(+). It functions in the pathway amino-acid biosynthesis; L-tryptophan biosynthesis; L-tryptophan from chorismate: step 1/5. Its activity is regulated as follows. Feedback inhibited by tryptophan. In terms of biological role, part of a heterotetrameric complex that catalyzes the two-step biosynthesis of anthranilate, an intermediate in the biosynthesis of L-tryptophan. In the first step, the glutamine-binding beta subunit (TrpG) of anthranilate synthase (AS) provides the glutamine amidotransferase activity which generates ammonia as a substrate that, along with chorismate, is used in the second step, catalyzed by the large alpha subunit of AS (TrpE) to produce anthranilate. In the absence of TrpG, TrpE can synthesize anthranilate directly from chorismate and high concentrations of ammonia. In Aeropyrum pernix (strain ATCC 700893 / DSM 11879 / JCM 9820 / NBRC 100138 / K1), this protein is Anthranilate synthase component 1 (trpE).